Here is a 262-residue protein sequence, read N- to C-terminus: Pyridoxine 5'-phosphate synthase (262 aa).

Residue asparagine 6 participates in 3-amino-2-oxopropyl phosphate binding. 8-9 contributes to the 1-deoxy-D-xylulose 5-phosphate binding site; sequence DH. Arginine 17 contributes to the 3-amino-2-oxopropyl phosphate binding site. Histidine 43 functions as the Proton acceptor in the catalytic mechanism. Residues arginine 45 and histidine 50 each coordinate 1-deoxy-D-xylulose 5-phosphate. The Proton acceptor role is filled by glutamate 70. Threonine 102 is a 1-deoxy-D-xylulose 5-phosphate binding site. Histidine 215 (proton donor) is an active-site residue. 3-amino-2-oxopropyl phosphate-binding positions include glycine 216 and 237–238; that span reads GH.

It belongs to the PNP synthase family. In terms of assembly, homooctamer; tetramer of dimers.

It is found in the cytoplasm. The catalysed reaction is 3-amino-2-oxopropyl phosphate + 1-deoxy-D-xylulose 5-phosphate = pyridoxine 5'-phosphate + phosphate + 2 H2O + H(+). Its pathway is cofactor biosynthesis; pyridoxine 5'-phosphate biosynthesis; pyridoxine 5'-phosphate from D-erythrose 4-phosphate: step 5/5. Catalyzes the complicated ring closure reaction between the two acyclic compounds 1-deoxy-D-xylulose-5-phosphate (DXP) and 3-amino-2-oxopropyl phosphate (1-amino-acetone-3-phosphate or AAP) to form pyridoxine 5'-phosphate (PNP) and inorganic phosphate. This Helicobacter pylori (strain G27) protein is Pyridoxine 5'-phosphate synthase.